A 323-amino-acid polypeptide reads, in one-letter code: DNA-directed RNA polymerase subunit alpha (323 aa).

The alpha N-terminal domain (alpha-NTD) stretch occupies residues 1-225 (MLDIAMPKIE…QYSQTIADFN (225 aa)). Residues 243 to 323 (PADIYDTPIE…TNSSPAGIES (81 aa)) are alpha C-terminal domain (alpha-CTD).

The protein belongs to the RNA polymerase alpha chain family. As to quaternary structure, homodimer. The RNAP catalytic core consists of 2 alpha, 1 beta, 1 beta' and 1 omega subunit. When a sigma factor is associated with the core the holoenzyme is formed, which can initiate transcription.

It carries out the reaction RNA(n) + a ribonucleoside 5'-triphosphate = RNA(n+1) + diphosphate. Functionally, DNA-dependent RNA polymerase catalyzes the transcription of DNA into RNA using the four ribonucleoside triphosphates as substrates. The sequence is that of DNA-directed RNA polymerase subunit alpha from Roseiflexus castenholzii (strain DSM 13941 / HLO8).